Consider the following 111-residue polypeptide: Flagellar hook-basal body complex protein FliE (111 aa).

Belongs to the FliE family.

The protein resides in the bacterial flagellum basal body. The chain is Flagellar hook-basal body complex protein FliE from Brucella abortus (strain S19).